Consider the following 473-residue polypeptide: uncharacterized protein (473 aa).

An N-terminal signal peptide occupies residues 1–35 (MLWAHCGRFLRYHLLPLLLCRLPFLLFFQRPQWAH). Disordered stretches follow at residues 142–201 (QRRR…RRRH), 232–254 (RGRLRHPAGSGPNTGGPRPGGAG), and 331–437 (IIPP…MTTN). Residues 155–165 (PSFPPPDPPSQ) show a composition bias toward pro residues. Over residues 168–182 (EDARDADAERAESPH) the composition is skewed to basic and acidic residues. Residues 243 to 254 (PNTGGPRPGGAG) show a composition bias toward gly residues. Basic and acidic residues predominate over residues 341–397 (QNEEPRQQLTGEETRNSTHTQREEVEDVSREGAREGNDGSRASGNDERRNNAGRYDD).

It belongs to the HHV-5 UL13 protein family. Interacts with host MICOS complex subunits IMMT and CHCHD3.

The protein resides in the host mitochondrion. Its function is as follows. Plays an essential role during infection by modulating mitochondrial ultrastructure and thereby increasing bioenergetic potential. Mechanistically, alters cristae architecture by interacting with components of the host mitochondrial contact site and cristae organizing system (MICOS) complex. This is an uncharacterized protein from Human cytomegalovirus (strain Merlin) (HHV-5).